We begin with the raw amino-acid sequence, 265 residues long: (-)-isopiperitenol/(-)-carveol dehydrogenase, mitochondrial (265 aa).

Residues Met-1–Ala-30 constitute a mitochondrion transit peptide. Ile-13–Val-38 provides a ligand contact to NAD(+). Ser-147 contacts substrate. The Proton acceptor role is filled by Tyr-160.

Belongs to the short-chain dehydrogenases/reductases (SDR) family. Homodimer and homotetramer. As to expression, peltate glandular trichomes.

The protein resides in the mitochondrion. The enzyme catalyses (1S,6R)-isopiperitenol + NAD(+) = (6R)-isopiperitenone + NADH + H(+). It catalyses the reaction (1S,5R)-carveol + NADP(+) = (R)-carvone + NADPH + H(+). Its function is as follows. Involved in the biosynthesis of menthol and related monoterpenes in leaves. Can use (-)-trans-carveol and, with a lower relative velocity, (-)-trans-isopiperitenol, (+)-neomenthol, (+)-neoisomenthol and (-)-cis-isopiperitenol as substrates, but not (-)-cis-carvenol, (-)-menthol, (+)-isomenthol, 7-hydroxy-limonene, (-)-isopiperitenone or (-)-carvone. The chain is (-)-isopiperitenol/(-)-carveol dehydrogenase, mitochondrial from Mentha piperita (Peppermint).